The sequence spans 72 residues: DNA-directed RNA polymerase subunit omega (72 aa).

This sequence belongs to the RNA polymerase subunit omega family. As to quaternary structure, the RNAP catalytic core consists of 2 alpha, 1 beta, 1 beta' and 1 omega subunit. When a sigma factor is associated with the core the holoenzyme is formed, which can initiate transcription.

The catalysed reaction is RNA(n) + a ribonucleoside 5'-triphosphate = RNA(n+1) + diphosphate. Its function is as follows. Promotes RNA polymerase assembly. Latches the N- and C-terminal regions of the beta' subunit thereby facilitating its interaction with the beta and alpha subunits. This chain is DNA-directed RNA polymerase subunit omega, found in Clostridium kluyveri (strain NBRC 12016).